Reading from the N-terminus, the 62-residue chain is Large ribosomal subunit protein bL32 (62 aa).

Positions 1-16 are enriched in basic residues; that stretch reads MAVQKNRKTRSKRGMR. Positions 1-62 are disordered; the sequence is MAVQKNRKTR…VISQGDSDDE (62 aa). Polar residues predominate over residues 53–62; that stretch reads VISQGDSDDE.

It belongs to the bacterial ribosomal protein bL32 family.

The sequence is that of Large ribosomal subunit protein bL32 from Alcanivorax borkumensis (strain ATCC 700651 / DSM 11573 / NCIMB 13689 / SK2).